Consider the following 1173-residue polypeptide: 3-hydroxy-3-methylglutaryl coenzyme A reductase mlcD (1173 aa).

2 N-linked (GlcNAc...) asparagine glycosylation sites follow: N143 and N186. Positions 241 to 420 (DVVVMVLGYI…FTFYTAILSI (180 aa)) constitute an SSD domain. 7 helical membrane passes run 242–262 (VVVM…LFLS), 272–292 (LATS…DVAI), 302–322 (LLSE…SITL), 368–388 (NIVC…VLGI), 397–417 (VLAA…YTAI), 479–499 (FWMV…TLFQ), and 594–614 (VLSK…SYLF). A linker region spans residues 498-673 (FQASSSGSLS…FTPTTTDSDS (176 aa)). Residues 647 to 666 (NQTPQIQSSLQAPQTRVFTP) show a composition bias toward polar residues. Residues 647–669 (NQTPQIQSSLQAPQTRVFTPTTT) form a disordered region. Residues 674 to 1133 (DASLVLIKAS…LVKAHMAHNR (460 aa)) are catalytic. Residue E822 is the Charge relay system of the active site. An N-linked (GlcNAc...) asparagine glycan is attached at N886. The active-site Charge relay system is the K956. The N-linked (GlcNAc...) asparagine glycan is linked to N997. The Charge relay system role is filled by D1032. H1128 functions as the Proton donor in the catalytic mechanism. N-linked (GlcNAc...) asparagine glycosylation is present at N1132. Positions 1132–1173 (NRSAPASSAPSRSVSPSGGTRTVPVPNNALRPSAAATDRARR) are disordered. Low complexity predominate over residues 1133-1148 (RSAPASSAPSRSVSPS).

Belongs to the HMG-CoA reductase family.

Its subcellular location is the endoplasmic reticulum membrane. It carries out the reaction (R)-mevalonate + 2 NADP(+) + CoA = (3S)-3-hydroxy-3-methylglutaryl-CoA + 2 NADPH + 2 H(+). It participates in polyketide biosynthesis. Functionally, HMG-CoA reductase; part of the gene cluster that mediates the biosynthesis of compactin, also known as mevastatin or ML-236B, and which acts as a potent competitive inhibitor of HMG-CoA reductase. Compactin biosynthesis is performed in two stages. The first stage is catalyzed by the nonaketide synthase mlcA, which belongs to type I polyketide synthases and catalyzes the iterative nine-step formation of the polyketide. This PKS stage is completed by the action of dehydrogenase mlcG, which catalyzes the NADPH-dependent reduction of the unsaturated tetra-, penta- and heptaketide intermediates that arise during the mlcA-mediated biosynthesis of the nonaketide chain and leads to dihydro-ML-236C carboxylate. Covalently bound dihydro-ML-236C carboxylate is released from mlcA by the mlcF esterase. Conversion of dihydro-ML-236C carboxylate into ML-236A carboxylate is subsequently performed with the participation of molecular oxygen and P450 monoogygenase mlcC. Finally, mlcH performs the conversion of ML-236A carboxylate to ML-236B/compactin carboxylate through the addition of the side-chain diketide moiety produced by the diketide synthase mlcB. HMG-CoA reductase mlcD may act as a down-regulator of compactin production and is involved in conferring resistance to ML-236B/compactin. In Penicillium citrinum, this protein is 3-hydroxy-3-methylglutaryl coenzyme A reductase mlcD.